The following is a 579-amino-acid chain: MSRDFKPGDLIFAKMKGYPHWPARVDEVPDGAVKPPTNKMPIFFFGTHETAFLGPKDIFPYSENKDKYGKPNKRKGFNEGLWEIDNNPKVKFSHQPSHPAVNTSIKETIQESSPEAAEGSEEKSGAKRRKPSIPKLPPKGDNNSPAEAEAEEKEMHSTKEDEEPSEKNSKEGVVKTNDASIPKVARRGRKRKAEKQAESEEAAVVATAAVVAAAAAPVTVSPKVSPKRGRPAVSEVKVPKPRGRPKLVKPSCLSESDPVNEEEKAKKKGPDEKPKKQGKKDEEGQKEEEKPKKEYDKKDGKKEAEPKRKNAAKLGSASASDSEDEGGEEEGDKKKKGGRSFQSTHRRNIMRGQHEKEVTERKRKQEEQGESELQNKEEGKKTEVKKMEKKRETSMDSRLQRIHAEIKNSLKIDNLDVNRCIEALDELASLQVSMQQAQKHTEMILTLKKIRKFKVSQVIMEKSTMLYNKFKTMFLVGEGDSVLSQVLNKSLAEQKQHEEANKTKEQWKKGTNKKNEKEKDQTGSKIVNGGSETQDTNQSQHNGENAEEKDKLEVASKKKTCGEESELEKPAKESAFENK.

The PWWP domain occupies 1–64 (MSRDFKPGDL…PKDIFPYSEN (64 aa)). 4 disordered regions span residues 62–81 (SENK…NEGL), 88–203 (PKVK…EEAA), 215–397 (AAPV…SMDS), and 492–579 (AEQK…FENK). Polar residues predominate over residues 94-107 (HQPSHPAVNTSIKE). Positions 153–173 (KEMHSTKEDEEPSEKNSKEGV) are enriched in basic and acidic residues. The span at 184-193 (VARRGRKRKA) shows a compositional bias: basic residues. Residues 186 to 196 (RRGRKRKAEKQ) carry the Nuclear localization signal motif. Positions 215–224 (AAPVTVSPKV) are enriched in low complexity. Positions 261-308 (EEEKAKKKGPDEKPKKQGKKDEEGQKEEEKPKKEYDKKDGKKEAEPKR) are enriched in basic and acidic residues. A compositionally biased stretch (acidic residues) spans 321–330 (DSEDEGGEEE). Basic residues predominate over residues 334–349 (KKKGGRSFQSTHRRNI). Positions 347-442 (RNIMRGQHEK…SMQQAQKHTE (96 aa)) form a coiled coil. Basic and acidic residues-rich tracts occupy residues 352-397 (GQHE…SMDS) and 492-522 (AEQK…KDQT). The segment at 387–464 (MEKKRETSMD…VSQVIMEKST (78 aa)) is integrase-binding domain (IBD). Residues 530–543 (GSETQDTNQSQHNG) show a composition bias toward polar residues. Residues 544–579 (ENAEEKDKLEVASKKKTCGEESELEKPAKESAFENK) show a composition bias toward basic and acidic residues.

This sequence belongs to the HDGF family.

It localises to the nucleus. Transcriptional coactivator involved in neuroepithelial stem cell differentiation and neurogenesis. Involved in particular in lens epithelial cell gene regulation and stress responses. May play an important role in lens epithelial to fiber cell terminal differentiation. May play a protective role during stress-induced apoptosis. This chain is Lens epithelium-derived growth factor (PSIP1), found in Gallus gallus (Chicken).